The primary structure comprises 306 residues: 4-hydroxybenzoate geranyltransferase 2 (306 aa).

Transmembrane regions (helical) follow at residues 38 to 58 (IGSW…ADLG), 61 to 81 (PKML…GCTI), 119 to 139 (LFIG…LAIV), 153 to 173 (ITYW…LLGS), 178 to 198 (GSVV…WTLV), 229 to 249 (IWIT…GFIV), 251 to 271 (IGLP…WQIF), and 285 to 305 (FVSN…GRLF).

Belongs to the UbiA prenyltransferase family. It depends on Mg(2+) as a cofactor. As to expression, expressed only in roots.

The protein resides in the endoplasmic reticulum membrane. The catalysed reaction is 4-hydroxybenzoate + (2E)-geranyl diphosphate = 3-geranyl-4-hydroxybenzoate + diphosphate. Its function is as follows. Prenyltransferase involved in the biosynthesis of shikonin, a naphthoquinone secondary metabolite. Could accept only geranyl diphosphate and not dimethylallyl diphosphate, farnesyl diphosphate, or geranylgeranyl diphosphate as substrate. This Lithospermum erythrorhizon (Purple gromwell) protein is 4-hydroxybenzoate geranyltransferase 2 (PGT-2).